Consider the following 90-residue polypeptide: Small ribosomal subunit protein uS15 (90 aa).

This sequence belongs to the universal ribosomal protein uS15 family. In terms of assembly, part of the 30S ribosomal subunit. Forms a bridge to the 50S subunit in the 70S ribosome, contacting the 23S rRNA.

In terms of biological role, one of the primary rRNA binding proteins, it binds directly to 16S rRNA where it helps nucleate assembly of the platform of the 30S subunit by binding and bridging several RNA helices of the 16S rRNA. Functionally, forms an intersubunit bridge (bridge B4) with the 23S rRNA of the 50S subunit in the ribosome. This chain is Small ribosomal subunit protein uS15, found in Helicobacter pylori (strain J99 / ATCC 700824) (Campylobacter pylori J99).